A 337-amino-acid chain; its full sequence is Palmitoyltransferase ZDHHC15 (337 aa).

The Cytoplasmic portion of the chain corresponds to 1-20 (MRRGWKMALSGGLRCCRRVL). A helical transmembrane segment spans residues 21–41 (SWVPVLVIVLVVLWSYYAYVF). At 42-56 (ELCLVTVLSPAEKVI) the chain is on the lumenal side. The helical transmembrane segment at 57-77 (YLILYHAIFVFFAWTYWKSIF) threads the bilayer. The Cytoplasmic segment spans residues 78–172 (TLPQQPNQKF…NNCIGFSNYK (95 aa)). The DHHC domain maps to 129–179 (RFCDRCHLIKPDRCHHCSVCAMCVLKMDHHCPWVNNCIGFSNYKFFLQFLA). Cys-131, Cys-134, His-144, Cys-145, Cys-148, Cys-151, and His-158 together coordinate Zn(2+). Cys-159 serves as the catalytic S-palmitoyl cysteine intermediate. Cys-165 serves as a coordination point for Zn(2+). Residues 173–193 (FFLQFLAYSVLYCLYIATTVF) traverse the membrane as a helical segment. Topologically, residues 194 to 210 (SYFIKYWRGELPSVRSK) are lumenal. A helical transmembrane segment spans residues 211–234 (FHVLFLLFVACMFFVSLVILFGYH). Residues 235–337 (CWLVSRNKTT…LSSLAVESET (103 aa)) lie on the Cytoplasmic side of the membrane. A disordered region spans residues 293 to 337 (HSFPMRSMNESQNPLLANEEPWEDNEDESQDYPEGLSSLAVESET). Residues 312 to 323 (EPWEDNEDESQD) are compositionally biased toward acidic residues.

The protein belongs to the DHHC palmitoyltransferase family. In terms of processing, autopalmitoylated (in vitro). In brain, expressed in both excitatory and inhibitory neurons but not expressed by glial cells.

It localises to the golgi apparatus membrane. The protein localises to the postsynaptic density. The enzyme catalyses L-cysteinyl-[protein] + hexadecanoyl-CoA = S-hexadecanoyl-L-cysteinyl-[protein] + CoA. The catalysed reaction is L-cysteinyl-[protein] + tetradecanoyl-CoA = S-tetradecanoyl-L-cysteinyl-[protein] + CoA. It carries out the reaction L-cysteinyl-[protein] + octadecanoyl-CoA = S-octadecanoyl-L-cysteinyl-[protein] + CoA. Its function is as follows. Palmitoyltransferase that catalyzes the addition of palmitate onto various protein substrates. Has no stringent fatty acid selectivity and in addition to palmitate can also transfer onto target proteins myristate from tetradecanoyl-CoA and stearate from octadecanoyl-CoA. Palmitoylates IGF2R and SORT1, promoting their partitioning to an endosomal membrane subdomain where they can interact with the retromer cargo-selective complex. Thereby, regulates retrograde transport from endosomes to the Golgi apparatus of these lysosomal sorting receptors and plays a role in trafficking of lysosomal proteins. In the nervous system, catalyzes the palmitoylation of DLG4/PSD95 and regulates its synaptic clustering and function in synaptogenesis. Could be involved in the differentiation of dopaminergic neurons and the development of the diencephalon. Could also catalyze the palmitoylation of GAP43. Could also palmitoylate DNAJC5 and regulate its localization to the Golgi membrane. Could also palmitoylate FYN as shown in vitro. May palmitoylate CALHM3 subunit of gustatory voltage-gated ion channels and modulate channel gating and kinetics. The sequence is that of Palmitoyltransferase ZDHHC15 from Rattus norvegicus (Rat).